The chain runs to 446 residues: Na(+)-translocating NADH-quinone reductase subunit A (446 aa).

This sequence belongs to the NqrA family. Composed of six subunits; NqrA, NqrB, NqrC, NqrD, NqrE and NqrF.

The catalysed reaction is a ubiquinone + n Na(+)(in) + NADH + H(+) = a ubiquinol + n Na(+)(out) + NAD(+). In terms of biological role, NQR complex catalyzes the reduction of ubiquinone-1 to ubiquinol by two successive reactions, coupled with the transport of Na(+) ions from the cytoplasm to the periplasm. NqrA to NqrE are probably involved in the second step, the conversion of ubisemiquinone to ubiquinol. The chain is Na(+)-translocating NADH-quinone reductase subunit A from Vibrio anguillarum (Listonella anguillarum).